The primary structure comprises 302 residues: tRNA pseudouridine synthase B (302 aa).

Asp43 (nucleophile) is an active-site residue.

Belongs to the pseudouridine synthase TruB family. Type 1 subfamily.

It carries out the reaction uridine(55) in tRNA = pseudouridine(55) in tRNA. Responsible for synthesis of pseudouridine from uracil-55 in the psi GC loop of transfer RNAs. This chain is tRNA pseudouridine synthase B, found in Burkholderia pseudomallei (strain 668).